Consider the following 93-residue polypeptide: Small ribosomal subunit protein uS17 (93 aa).

Belongs to the universal ribosomal protein uS17 family. Part of the 30S ribosomal subunit.

Its function is as follows. One of the primary rRNA binding proteins, it binds specifically to the 5'-end of 16S ribosomal RNA. The chain is Small ribosomal subunit protein uS17 from Rhodococcus jostii (strain RHA1).